A 276-amino-acid polypeptide reads, in one-letter code: Large ribosomal subunit protein uL2 (276 aa).

Disordered regions lie at residues 1–60 and 226–276; these read MSIK…RHKR and NAVD…KRNQ. Basic and acidic residues predominate over residues 20–31; it reads SKEEITREEPEK. Composition is skewed to basic residues over residues 50-60 and 258-276; these read STRRQGGRHKR and KTRR…KRNQ.

This sequence belongs to the universal ribosomal protein uL2 family. In terms of assembly, part of the 50S ribosomal subunit. Forms a bridge to the 30S subunit in the 70S ribosome.

Functionally, one of the primary rRNA binding proteins. Required for association of the 30S and 50S subunits to form the 70S ribosome, for tRNA binding and peptide bond formation. It has been suggested to have peptidyltransferase activity; this is somewhat controversial. Makes several contacts with the 16S rRNA in the 70S ribosome. This Natranaerobius thermophilus (strain ATCC BAA-1301 / DSM 18059 / JW/NM-WN-LF) protein is Large ribosomal subunit protein uL2.